A 117-amino-acid polypeptide reads, in one-letter code: SPbeta prophage-derived uncharacterized protein YosL (117 aa).

The protein is SPbeta prophage-derived uncharacterized protein YosL (yosL) of Bacillus subtilis (strain 168).